An 878-amino-acid polypeptide reads, in one-letter code: Valine--tRNA ligase (878 aa).

The short motif at 43 to 53 (PYPTGRLHLGH) is the 'HIGH' region element. Positions 527–531 (KMSKS) match the 'KMSKS' region motif. Residue Lys-530 coordinates ATP.

Belongs to the class-I aminoacyl-tRNA synthetase family. ValS type 2 subfamily.

It is found in the cytoplasm. It carries out the reaction tRNA(Val) + L-valine + ATP = L-valyl-tRNA(Val) + AMP + diphosphate. In terms of biological role, catalyzes the attachment of valine to tRNA(Val). As ValRS can inadvertently accommodate and process structurally similar amino acids such as threonine, to avoid such errors, it has a 'posttransfer' editing activity that hydrolyzes mischarged Thr-tRNA(Val) in a tRNA-dependent manner. The protein is Valine--tRNA ligase of Methanocaldococcus jannaschii (strain ATCC 43067 / DSM 2661 / JAL-1 / JCM 10045 / NBRC 100440) (Methanococcus jannaschii).